The chain runs to 188 residues: MSLFSLWVMAFGLSMDAFAVSICKGLAMEKFQWCGALKAGLYFGLFQAVMPLIGFLLGVQFSEYITDYDHWVAFFLLALIGVNMLRESLSDEDDEDSCSNDFNFKTMMTLGFATSIDALAVGVTFAFLSVDIYSSVVTIGLITAALSIIGVKSGHFLGKKIKTKAEILGGLILIGLGVKILMEHTLFG.

Transmembrane regions (helical) follow at residues 3–23, 39–59, 65–85, 110–130, 131–151, and 167–187; these read LFSL…VSIC, AGLY…LLGV, ITDY…VNML, LGFA…FLSV, DIYS…IIGV, and ILGG…HTLF.

Belongs to the MntP (TC 9.B.29) family.

Its subcellular location is the cell inner membrane. Functionally, probably functions as a manganese efflux pump. This chain is Putative manganese efflux pump MntP, found in Mannheimia succiniciproducens (strain KCTC 0769BP / MBEL55E).